A 105-amino-acid polypeptide reads, in one-letter code: uncharacterized protein (105 aa).

At 1-48 the chain is on the extracellular side; the sequence is MAPKAFFVCLPWVLPRHALIVRQAGNPYHFLAYTNPRAPGKLQDSHCP. Residues 49-69 traverse the membrane as a helical segment; sequence VFFMGIIIITIITVTLAIIII. Asn-70 is a topological domain (cytoplasmic). The helical transmembrane segment at 71-91 threads the bilayer; that stretch reads IIFLTLFDDGMCFYCSLLTFS. The Extracellular segment spans residues 92–105; it reads FVSFNFDHFDHFDL.

It is found in the membrane. This is an uncharacterized protein from Saccharomyces cerevisiae (strain ATCC 204508 / S288c) (Baker's yeast).